The primary structure comprises 205 residues: MLITIEGIDGSGKSTLLARLRELLADLDPLFTREPGATWVGESVRRAIAERMDPITEALLFCADHAAHIDTVIRPALDEGRLVISDRYADSRFAYQPVVLDGVLPDPLSWLRRIHEGWSIRPDRTFLLVLPVEDAVSRLGPEKKREYFENAAILEQVQENYLNLAAADPLRFVVVDALLPKEEVARFIAGEIRAGARSSRRRPRA.

7–14 is a binding site for ATP; the sequence is GIDGSGKS.

This sequence belongs to the thymidylate kinase family.

It carries out the reaction dTMP + ATP = dTDP + ADP. This Methanoculleus marisnigri (strain ATCC 35101 / DSM 1498 / JR1) protein is Probable thymidylate kinase.